A 90-amino-acid polypeptide reads, in one-letter code: MSNNLLLPDKNSRMQREQWKWTRMTLTRAHYKQDNKQCQHWRINSQTTREEWQMLCPGRKWILNLLTRLGLNLMIISRRDQALDMEMSLM.

The protein belongs to the hantavirus NS-S protein family.

Its subcellular location is the host cytoplasm. The protein resides in the host perinuclear region. Functionally, antagonizes host type-I IFN signaling pathway. The protein is Non-structural protein NS-S (N) of Homo sapiens (Human).